The following is a 555-amino-acid chain: 2-succinyl-5-enolpyruvyl-6-hydroxy-3-cyclohexene-1-carboxylate synthase (555 aa).

The protein belongs to the TPP enzyme family. MenD subfamily. As to quaternary structure, homodimer. Mg(2+) is required as a cofactor. The cofactor is Mn(2+). Requires thiamine diphosphate as cofactor.

The catalysed reaction is isochorismate + 2-oxoglutarate + H(+) = 5-enolpyruvoyl-6-hydroxy-2-succinyl-cyclohex-3-ene-1-carboxylate + CO2. Its pathway is quinol/quinone metabolism; 1,4-dihydroxy-2-naphthoate biosynthesis; 1,4-dihydroxy-2-naphthoate from chorismate: step 2/7. The protein operates within quinol/quinone metabolism; menaquinone biosynthesis. In terms of biological role, catalyzes the thiamine diphosphate-dependent decarboxylation of 2-oxoglutarate and the subsequent addition of the resulting succinic semialdehyde-thiamine pyrophosphate anion to isochorismate to yield 2-succinyl-5-enolpyruvyl-6-hydroxy-3-cyclohexene-1-carboxylate (SEPHCHC). The chain is 2-succinyl-5-enolpyruvyl-6-hydroxy-3-cyclohexene-1-carboxylate synthase from Cronobacter sakazakii (strain ATCC BAA-894) (Enterobacter sakazakii).